Here is a 253-residue protein sequence, read N- to C-terminus: Imidazole glycerol phosphate synthase subunit HisF (253 aa).

Residues Asp11 and Asp130 contribute to the active site.

Belongs to the HisA/HisF family. As to quaternary structure, heterodimer of HisH and HisF.

The protein resides in the cytoplasm. The catalysed reaction is 5-[(5-phospho-1-deoxy-D-ribulos-1-ylimino)methylamino]-1-(5-phospho-beta-D-ribosyl)imidazole-4-carboxamide + L-glutamine = D-erythro-1-(imidazol-4-yl)glycerol 3-phosphate + 5-amino-1-(5-phospho-beta-D-ribosyl)imidazole-4-carboxamide + L-glutamate + H(+). Its pathway is amino-acid biosynthesis; L-histidine biosynthesis; L-histidine from 5-phospho-alpha-D-ribose 1-diphosphate: step 5/9. In terms of biological role, IGPS catalyzes the conversion of PRFAR and glutamine to IGP, AICAR and glutamate. The HisF subunit catalyzes the cyclization activity that produces IGP and AICAR from PRFAR using the ammonia provided by the HisH subunit. In Roseobacter denitrificans (strain ATCC 33942 / OCh 114) (Erythrobacter sp. (strain OCh 114)), this protein is Imidazole glycerol phosphate synthase subunit HisF.